Here is a 297-residue protein sequence, read N- to C-terminus: MSANKQKKLSTMEVDPNEDVSSSSEDDDDDEPHPDAYKGNEEVQIDFEGRAPVDPDAQGISQLLQRLFLRAHINCNQMADLIIAQNFIGSVICQCDDEGTESETEDDNMVEDGTIFGITSVLNLTAKKDQPSIAQLRTYILDRAKTHASPEVQQQLKEILDSEQRHVGFLINERFINIPAQISVPLLQSLQQEIEAAKAKKMKYDFGTLLLLVKFYRKESKKGKPGEDVYTNAEDELLSDRAKFSFEYSMASETDSGMSGDWLEGDAVMTPYRKLLVLEAKKLPQLIDDIQRFINGE.

Residues 1-40 (MSANKQKKLSTMEVDPNEDVSSSSEDDDDDEPHPDAYKGN) form a disordered region.

The protein belongs to the BCP1 family.

This chain is Protein BCCIP homolog, found in Drosophila melanogaster (Fruit fly).